The chain runs to 905 residues: Coatomer subunit beta' (905 aa).

WD repeat units lie at residues 13-52 (ARSD…LVKT), 55-94 (VCDL…RVHM), 97-136 (AHSD…SCSQ), 140-180 (GHTH…PNFT), 183-224 (GHEK…CVQT), 227-266 (GHAQ…LEST), 350-388 (SCEI…NKSF), and 390-425 (SAQE…KSFK). Residue Lys627 is modified to N6-acetyllysine. Residues 746 to 783 (IRTGRLPEAAFLARTYLPSQVSRVVKLWRENLSKVNQK) form a WD 9 repeat. Residues 837-873 (EEAKGFQPSRPTAQQEPDGKPASSPVIMASQTTHKEE) form a disordered region. The residue at position 859 (Ser859) is a Phosphoserine. Residues 867 to 891 (QTTHKEEKSLLELEVDLDNLELEDI) are a coiled coil.

It belongs to the WD repeat COPB2 family. In terms of assembly, oligomeric complex that consists of at least the alpha, beta, beta', gamma, delta, epsilon and zeta subunits. Probably interacts with PEX11A. Interacts with SCYL1. Interacts with JAGN1.

It is found in the cytoplasm. The protein resides in the cytosol. The protein localises to the golgi apparatus membrane. Its subcellular location is the cytoplasmic vesicle. It localises to the COPI-coated vesicle membrane. Functionally, the coatomer is a cytosolic protein complex that binds to dilysine motifs and reversibly associates with Golgi non-clathrin-coated vesicles, which further mediate biosynthetic protein transport from the ER, via the Golgi up to the trans Golgi network. Coatomer complex is required for budding from Golgi membranes, and is essential for the retrograde Golgi-to-ER transport of dilysine-tagged proteins. In mammals, the coatomer can only be recruited by membranes associated to ADP-ribosylation factors (ARFs), which are small GTP-binding proteins; the complex also influences the Golgi structural integrity, as well as the processing, activity, and endocytic recycling of LDL receptors. In terms of biological role, this coatomer complex protein, essential for Golgi budding and vesicular trafficking, is a selective binding protein (RACK) for protein kinase C, epsilon type. It binds to Golgi membranes in a GTP-dependent manner. This chain is Coatomer subunit beta' (Copb2), found in Mus musculus (Mouse).